Reading from the N-terminus, the 79-residue chain is Small ribosomal subunit protein bS18 (79 aa).

This sequence belongs to the bacterial ribosomal protein bS18 family. As to quaternary structure, part of the 30S ribosomal subunit. Forms a tight heterodimer with protein bS6.

Binds as a heterodimer with protein bS6 to the central domain of the 16S rRNA, where it helps stabilize the platform of the 30S subunit. This is Small ribosomal subunit protein bS18 from Renibacterium salmoninarum (strain ATCC 33209 / DSM 20767 / JCM 11484 / NBRC 15589 / NCIMB 2235).